A 173-amino-acid polypeptide reads, in one-letter code: MSIILGIDPGSRITGYGVIRQVGRQLTYLGSGCIRTKVDDLPSRLKLIYAGVTEIITQFQPDYFAIEQVFMAKNADSALKLGQVRGVAIVAAVNQELPVFEYAARQVKQTVVGIGSAEKSQVQHMVRTLLKLPANPQADAADALAIAITHCHVSQNVMQMSESRLNLARGRLR.

Active-site residues include Asp8, Glu67, and Asp139. Residues Asp8, Glu67, and Asp139 each contribute to the Mg(2+) site.

Belongs to the RuvC family. Homodimer which binds Holliday junction (HJ) DNA. The HJ becomes 2-fold symmetrical on binding to RuvC with unstacked arms; it has a different conformation from HJ DNA in complex with RuvA. In the full resolvosome a probable DNA-RuvA(4)-RuvB(12)-RuvC(2) complex forms which resolves the HJ. Mg(2+) is required as a cofactor.

It is found in the cytoplasm. It catalyses the reaction Endonucleolytic cleavage at a junction such as a reciprocal single-stranded crossover between two homologous DNA duplexes (Holliday junction).. The RuvA-RuvB-RuvC complex processes Holliday junction (HJ) DNA during genetic recombination and DNA repair. Endonuclease that resolves HJ intermediates. Cleaves cruciform DNA by making single-stranded nicks across the HJ at symmetrical positions within the homologous arms, yielding a 5'-phosphate and a 3'-hydroxyl group; requires a central core of homology in the junction. The consensus cleavage sequence is 5'-(A/T)TT(C/G)-3'. Cleavage occurs on the 3'-side of the TT dinucleotide at the point of strand exchange. HJ branch migration catalyzed by RuvA-RuvB allows RuvC to scan DNA until it finds its consensus sequence, where it cleaves and resolves the cruciform DNA. This Salmonella choleraesuis (strain SC-B67) protein is Crossover junction endodeoxyribonuclease RuvC.